Consider the following 66-residue polypeptide: UPF0337 protein M6_Spy1542 (66 aa).

The span at 1–10 shows a compositional bias: basic and acidic residues; that stretch reads MSEEKLKAKV. Residues 1–22 are disordered; that stretch reads MSEEKLKAKVEQASGSLKEGAG.

Belongs to the UPF0337 (CsbD) family.

In Streptococcus pyogenes serotype M6 (strain ATCC BAA-946 / MGAS10394), this protein is UPF0337 protein M6_Spy1542.